The sequence spans 217 residues: Ribonuclease HII 2 (217 aa).

Positions glycine 28 to proline 217 constitute an RNase H type-2 domain. The a divalent metal cation site is built by aspartate 34, glutamate 35, and aspartate 126.

The protein belongs to the RNase HII family. The cofactor is Mn(2+). Mg(2+) is required as a cofactor.

It is found in the cytoplasm. The catalysed reaction is Endonucleolytic cleavage to 5'-phosphomonoester.. Functionally, endonuclease that specifically degrades the RNA of RNA-DNA hybrids. The protein is Ribonuclease HII 2 of Methylibium petroleiphilum (strain ATCC BAA-1232 / LMG 22953 / PM1).